We begin with the raw amino-acid sequence, 321 residues long: Cathepsin O (321 aa).

The N-terminal stretch at 1 to 23 (MDVRALPWLPWLLWLLCRGGGDA) is a signal peptide. Residues 24-107 (DSRAPFTPTW…EVHMSIPNVS (84 aa)) constitute a propeptide, activation peptide. N62 and N105 each carry an N-linked (GlcNAc...) asparagine glycan. 3 disulfide bridges follow: C129-C170, C163-C204, and C262-C310. Residue C132 is part of the active site. Active-site residues include H269 and N289.

It belongs to the peptidase C1 family. Expressed in all tissues examined. High levels seen in the ovary, kidney and placenta while low levels seen in thymus and skeletal muscle.

It is found in the lysosome. It catalyses the reaction The recombinant human enzyme hydrolyzes synthetic endopeptidase substrates including Z-Phe-Arg-NHMec and Z-Arg-Arg-NHMec.. Functionally, proteolytic enzyme possibly involved in normal cellular protein degradation and turnover. In Homo sapiens (Human), this protein is Cathepsin O (CTSO).